We begin with the raw amino-acid sequence, 510 residues long: Major facilitator superfamily domain-containing protein 4A (510 aa).

12 helical membrane-spanning segments follow: residues 19–39 (LTYW…GPTL), 53–73 (ISWV…LGGV), 82–102 (LWAL…IPFC), 107–127 (VLAS…TVAN), 139–159 (AFFL…SPLI), 218–238 (YAFW…LFLL), 303–323 (FFAI…MMGA), 345–365 (GYLP…SIPV), 380–400 (VGVV…IFLF), 401–421 (VGTA…LAYT), 434–454 (VLVT…GLIF), and 462–482 (FLVC…LLLF).

This sequence belongs to the major facilitator superfamily.

Its subcellular location is the membrane. In Mus musculus (Mouse), this protein is Major facilitator superfamily domain-containing protein 4A.